A 273-amino-acid polypeptide reads, in one-letter code: Putative pyruvate, phosphate dikinase regulatory protein (273 aa).

Position 153–160 (153–160 (GVSRTSKT)) interacts with ADP.

The protein belongs to the pyruvate, phosphate/water dikinase regulatory protein family. PDRP subfamily.

It carries out the reaction N(tele)-phospho-L-histidyl/L-threonyl-[pyruvate, phosphate dikinase] + ADP = N(tele)-phospho-L-histidyl/O-phospho-L-threonyl-[pyruvate, phosphate dikinase] + AMP + H(+). The enzyme catalyses N(tele)-phospho-L-histidyl/O-phospho-L-threonyl-[pyruvate, phosphate dikinase] + phosphate + H(+) = N(tele)-phospho-L-histidyl/L-threonyl-[pyruvate, phosphate dikinase] + diphosphate. Its function is as follows. Bifunctional serine/threonine kinase and phosphorylase involved in the regulation of the pyruvate, phosphate dikinase (PPDK) by catalyzing its phosphorylation/dephosphorylation. The chain is Putative pyruvate, phosphate dikinase regulatory protein from Rhizobium meliloti (strain 1021) (Ensifer meliloti).